The primary structure comprises 805 residues: Shutoff protein (805 aa).

Residues 1–88 (MESVEKEDSL…QVGRGDQRHG (88 aa)) form a disordered region. Residues 18–29 (TTASTDAANAPT) are compositionally biased toward polar residues. 2 stretches are compositionally biased toward basic and acidic residues: residues 59-70 (RSVPTEDKKQDQ) and 79-88 (QVGRGDQRHG). The segment at 280–345 (VMSELIVRRA…AVLVTVELEC (66 aa)) is binding to host EIF4G. The 119-residue stretch at 348–466 (RFFADPEMQR…DLWTAFNERS (119 aa)) folds into the RRM domain. Phosphotyrosine; by host is present on residues tyrosine 365 and tyrosine 682. The tract at residues 684-805 (DPQSGEELNP…AGTACSPTQP (122 aa)) is disordered. A compositionally biased stretch (gly residues) spans 726–742 (GRGGILGQSGRGGFGRG). Positions 754 to 763 (RSFRGRRGVR) are enriched in basic residues.

It belongs to the adenoviridae shutoff protein family. Monomer. Interacts with hexon protein; this interaction allows chaperoning and trimerization of hexon proteins. Interacts (via N-terminus) with host initiation factor EIF4G (via C-terminus). Interacts (via RRM domain) with viral mRNAs that contain the tripartite leader; this interaction allows ribosome shunting and expression of viral late mRNAs. Post-translationally, might be cleaved by the viral protease. In terms of processing, phosphorylated. Tyrosine phosphorylation enhances preferential binding to tripartite leader mRNAs and allows ribosome shunting. Methylated. Asymmetric dimethylation by host PRMT1 of the Arg/Gly-rich region may regulate shutoff protein binding to hexon and promote the capsid assembly in the nucleus.

It localises to the host cytoplasm. Protein that inhibits host translation while promoting late viral translation by ribosome shunting. Blocks host cap-dependent translation by binding to eIF4G, displacing MKNK1 from cap initiation complexes and preventing EIF4E phosphorylation. Binds to the tripartite leader sequence of viral late mRNAs and recruits host eIF4G, PABPC1/poly-A binding protein and 40S ribosomes subunits on viral mRNAs, allowing ribosome shunting and efficient translation of late viral mRNAs even though conventional translation via ribosome scanning from the cap has been shut off in the host cell. During assembly, acts as a chaperone protein that helps hexon proteins assembly into trimers. This is Shutoff protein from Homo sapiens (Human).